Here is a 379-residue protein sequence, read N- to C-terminus: tRNA-specific 2-thiouridylase MnmA (379 aa).

Residues 9–16 (AMSGGVDS) and M35 contribute to the ATP site. The interaction with target base in tRNA stretch occupies residues 94–96 (NPD). C99 functions as the Nucleophile in the catalytic mechanism. A disulfide bridge connects residues C99 and C195. G123 lines the ATP pocket. Residues 145–147 (KDQ) are interaction with tRNA. C195 serves as the catalytic Cysteine persulfide intermediate. The segment at 307 to 308 (RY) is interaction with tRNA.

Belongs to the MnmA/TRMU family.

The protein localises to the cytoplasm. The enzyme catalyses S-sulfanyl-L-cysteinyl-[protein] + uridine(34) in tRNA + AH2 + ATP = 2-thiouridine(34) in tRNA + L-cysteinyl-[protein] + A + AMP + diphosphate + H(+). Its function is as follows. Catalyzes the 2-thiolation of uridine at the wobble position (U34) of tRNA, leading to the formation of s(2)U34. This Xylella fastidiosa (strain 9a5c) protein is tRNA-specific 2-thiouridylase MnmA.